Consider the following 216-residue polypeptide: UDP-N-acetylglucosamine transferase subunit ALG14 (216 aa).

Residues 1–3 are Lumenal-facing; that stretch reads MVC. A helical transmembrane segment spans residues 4–24; sequence VLTLAASAGGLAVLLIVRLWA. At 25–216 the chain is on the cytoplasmic side; sequence VLRSHPVTPR…PKSVYLGRIV (192 aa).

This sequence belongs to the ALG14 family. Forms with ALG13 the active heterodimeric UDP-N-acetylglucosamine transferase complex.

It localises to the endoplasmic reticulum membrane. In terms of biological role, part of the UDP-N-acetylglucosamine transferase complex that operates in the biosynthetic pathway of dolichol-linked oligosaccharides, the glycan precursors employed in protein asparagine (N)-glycosylation. The assembly of dolichol-linked oligosaccharides begins on the cytosolic side of the endoplasmic reticulum membrane and finishes in its lumen. The sequential addition of sugars to dolichol pyrophosphate produces dolichol-linked oligosaccharides containing fourteen sugars, including two GlcNAcs, nine mannoses and three glucoses. Once assembled, the oligosaccharides are transferred from the lipid to nascent proteins by oligosaccharyltransferases. Functions as a protein-membrane adapter recruiting ALG13 at the cytoplasmic face of the endoplasmic reticulum, where the complex catalyzes the second step of dolichol pyrophosphate biosynthesis, transferring a beta1,4-linked N-acetylglucosamine (GlcNAc) from UDP-GlcNAc to GlcNAc-pyrophosphatedolichol (Gn-PDol) to produce N,N'-diacetylchitobiosyl diphosphodolichol. N,N'-diacetylchitobiosyl diphosphodolichol is a substrate for ALG1, the following enzyme in the biosynthetic pathway. This Rattus norvegicus (Rat) protein is UDP-N-acetylglucosamine transferase subunit ALG14.